The primary structure comprises 102 residues: Outer membrane protein assembly factor BamE (102 aa).

An N-terminal signal peptide occupies residues 1–20 (MNNYIKALLIIICFSSCSIS).

The protein belongs to the BamE family. As to quaternary structure, part of the Bam complex.

Its subcellular location is the cell outer membrane. Functionally, part of the outer membrane protein assembly complex, which is involved in assembly and insertion of beta-barrel proteins into the outer membrane. This is Outer membrane protein assembly factor BamE from Buchnera aphidicola subsp. Acyrthosiphon pisum (strain APS) (Acyrthosiphon pisum symbiotic bacterium).